The chain runs to 210 residues: Large ribosomal subunit protein bL25 (210 aa).

A disordered region spans residues 179-210; it reads LPPQQEEEIHSGEQQEPGQPEAEEGRETTPEG. Basic and acidic residues predominate over residues 201-210; that stretch reads EEGRETTPEG.

Belongs to the bacterial ribosomal protein bL25 family. CTC subfamily. As to quaternary structure, part of the 50S ribosomal subunit; part of the 5S rRNA/L5/L18/L25 subcomplex. Contacts the 5S rRNA. Binds to the 5S rRNA independently of L5 and L18.

In terms of biological role, this is one of the proteins that binds to the 5S RNA in the ribosome where it forms part of the central protuberance. This chain is Large ribosomal subunit protein bL25, found in Geobacillus thermodenitrificans (strain NG80-2).